Here is a 439-residue protein sequence, read N- to C-terminus: Protein pop-1 (439 aa).

The segment at 1-38 is disordered; it reads MMADEELGDEVKVFRRDEDADDDPMISGETSEQQLADD. The segment covering 9-18 has biased composition (basic and acidic residues); the sequence is DEVKVFRRDE. Residues 87–138 are involved in nuclear asymmetry; it reads SGLPIMFPMVVPQYLSPNPNINMMNMMTMRAAMAGAPLSPAFPAMFSPNPLF. Phosphoserine; by LIT1 is present on Ser125. The segment at residues 199 to 269 is a DNA-binding region (HMG box); sequence IKKPLNAFMW…SHKEKYPQWS (71 aa). Over residues 254–265 the composition is skewed to basic and acidic residues; that stretch reads AKKDRESHKEKY. Disordered regions lie at residues 254–298, 329–365, and 385–439; these read AKKD…NNDQ, RSGS…MPMN, and SAHL…VCTL. Residues 277 to 286 are compositionally biased toward basic residues; sequence NKKKPKRKRD. Low complexity-rich tracts occupy residues 346–365 and 385–400; these read GCSS…MPMN and SAHL…SGTS. Over residues 409–420 the composition is skewed to acidic residues; the sequence is SESDVDEDEDID. Polar residues predominate over residues 422–439; sequence TITQQTQEYIMQESVCTL.

It belongs to the TCF/LEF family. As to quaternary structure, interacts with hda-1. Interacts with bar-1. Interacts with par-5; the interaction is direct and is enhanced by lit-1-mediated pop-1 phosphorylation. The interaction also leads to the subsequent nuclear export of pop-1. Interacts (when phosphorylated on Ser-125) with lit-1; the interaction is dependent on the beta-catenin-lit-1 complex. Interacts with wrm-1. Phosphorylated on Ser-125 by lit-1 in the beta-catenin-lit-1 complex. Phosphorylation promotes the interaction of pop-1 and par-5 and the subsequent translocation of pop-1 from the nucleus to the cytoplasm.

It localises to the nucleus. It is found in the cytoplasm. Part of the Wnt signaling pathway essential for the specification of the mesodermal cell fate in early embryos. Required for asymmetrical division of somatic gonadal precursor descendants which initiate axis formation required to control organ shape. Similarly, involved in asymmetrical division of seam cells, a stem cell-like lineage. Represses expression of target genes via its interaction with hda-1 histone deacetylase. Required for specification of the M lineage-derived coelomocyte and sex myoblast fate. Regulates coelomocyte fate by positively regulating proliferation and ceh-34 and possibly eya-1 expression in M.dlpa and M.drpa precursors. This Caenorhabditis briggsae protein is Protein pop-1.